We begin with the raw amino-acid sequence, 99 residues long: Protein S100-Z (99 aa).

EF-hand domains are found at residues 13-48 (ITVFHNYSGSEGDKYKLSKGELKELLNAELTDFLMS) and 50-85 (KDPMLVEKIMNDLDSNKDNEVDFNEFVVLVAALTVA). 10 residues coordinate Ca(2+): Ser20, Glu23, Asp25, Lys28, Glu33, Asp63, Asn65, Asp67, Glu69, and Glu74.

The protein belongs to the S-100 family. In terms of assembly, homodimer. Homodimers may assemble into larger stable oligomers. As to expression, in larva at 5 days post-fertilization, shows very restricted expression only in a few large cells of the olfactory placode. More widely expressed in the adult. Expressed at higher levels in gut than in spleen, head kidney and gill.

In Danio rerio (Zebrafish), this protein is Protein S100-Z.